A 361-amino-acid polypeptide reads, in one-letter code: UDP-N-acetylglucosamine--N-acetylmuramyl-(pentapeptide) pyrophosphoryl-undecaprenol N-acetylglucosamine transferase (361 aa).

UDP-N-acetyl-alpha-D-glucosamine-binding positions include 12-14, Asn126, Arg167, Ser192, Ile247, and Gln292; that span reads TGG.

The protein belongs to the glycosyltransferase 28 family. MurG subfamily.

It is found in the cell inner membrane. It catalyses the reaction di-trans,octa-cis-undecaprenyl diphospho-N-acetyl-alpha-D-muramoyl-L-alanyl-D-glutamyl-meso-2,6-diaminopimeloyl-D-alanyl-D-alanine + UDP-N-acetyl-alpha-D-glucosamine = di-trans,octa-cis-undecaprenyl diphospho-[N-acetyl-alpha-D-glucosaminyl-(1-&gt;4)]-N-acetyl-alpha-D-muramoyl-L-alanyl-D-glutamyl-meso-2,6-diaminopimeloyl-D-alanyl-D-alanine + UDP + H(+). The protein operates within cell wall biogenesis; peptidoglycan biosynthesis. In terms of biological role, cell wall formation. Catalyzes the transfer of a GlcNAc subunit on undecaprenyl-pyrophosphoryl-MurNAc-pentapeptide (lipid intermediate I) to form undecaprenyl-pyrophosphoryl-MurNAc-(pentapeptide)GlcNAc (lipid intermediate II). This is UDP-N-acetylglucosamine--N-acetylmuramyl-(pentapeptide) pyrophosphoryl-undecaprenol N-acetylglucosamine transferase from Syntrophus aciditrophicus (strain SB).